A 442-amino-acid chain; its full sequence is Probable glycine dehydrogenase (decarboxylating) subunit 1 (442 aa).

Belongs to the GcvP family. N-terminal subunit subfamily. As to quaternary structure, the glycine cleavage system is composed of four proteins: P, T, L and H. In this organism, the P 'protein' is a heterodimer of two subunits.

It catalyses the reaction N(6)-[(R)-lipoyl]-L-lysyl-[glycine-cleavage complex H protein] + glycine + H(+) = N(6)-[(R)-S(8)-aminomethyldihydrolipoyl]-L-lysyl-[glycine-cleavage complex H protein] + CO2. The glycine cleavage system catalyzes the degradation of glycine. The P protein binds the alpha-amino group of glycine through its pyridoxal phosphate cofactor; CO(2) is released and the remaining methylamine moiety is then transferred to the lipoamide cofactor of the H protein. The protein is Probable glycine dehydrogenase (decarboxylating) subunit 1 of Phenylobacterium zucineum (strain HLK1).